We begin with the raw amino-acid sequence, 388 residues long: Proteasomal ubiquitin receptor ADRM1 homolog rpn1302 (388 aa).

Residues 15–132 (RGKYGLVSVK…SLINQLIADP (118 aa)) enclose the Pru domain. 2 disordered regions span residues 202 to 227 (RASSESNLNGPHATAGENGEDHEEAT) and 368 to 388 (SDGEVEEEGDVEMRESNEKDE). Acidic residues predominate over residues 368 to 377 (SDGEVEEEGD). The segment covering 378–388 (VEMRESNEKDE) has biased composition (basic and acidic residues).

Belongs to the ADRM1 family. Component of the 19S proteasome regulatory particle complex. The 2 S.pombe rpn13 homologs, rpn1301 and rpn1302 are present at a 0.2-1 ratio.

It localises to the cytoplasm. The protein localises to the nucleus. Functionally, component of the 26S proteasome, a multiprotein complex involved in the ATP-dependent degradation of ubiquitinated proteins. This complex plays a key role in the maintenance of protein homeostasis by removing misfolded or damaged proteins, which could impair cellular functions, and by removing proteins whose functions are no longer required. Therefore, the proteasome participates in numerous cellular processes, including cell cycle progression, apoptosis, or DNA damage repair. Within the complex, functions as a proteasomal ubiquitin receptor. The sequence is that of Proteasomal ubiquitin receptor ADRM1 homolog rpn1302 (rpn1302) from Schizosaccharomyces pombe (strain 972 / ATCC 24843) (Fission yeast).